We begin with the raw amino-acid sequence, 907 residues long: Leucine-rich repeat-containing G-protein coupled receptor 5 (907 aa).

Positions M1–G21 are cleaved as a signal peptide. Over G22–R561 the chain is Extracellular. The LRRNT domain occupies P25–V66. 2 cysteine pairs are disulfide-bonded: C34-C40 and C38-C52. Residues N63 and N77 are each glycosylated (N-linked (GlcNAc...) asparagine). 16 LRR repeats span residues F67–R90, F91–G112, S115–N136, S139–G160, S163–S184, A187–N208, S211–G232, S235–L256, N258–G279, S282–H303, E306–A328, N329–Q350, N353–Q374, K375–Q396, S399–T420, and S423–T446. N208 carries an N-linked (GlcNAc...) asparagine glycan. The cysteines at positions 348 and 373 are disulfide-linked. A disulfide bridge connects residues C479 and C541. N500 is a glycosylation site (N-linked (GlcNAc...) asparagine). A helical membrane pass occupies residues I562–V582. Residues F583–K593 lie on the Cytoplasmic side of the membrane. A helical transmembrane segment spans residues L594 to A614. The Extracellular segment spans residues G615 to H638. Residues C637 and C712 are joined by a disulfide bond. Residues V639 to A659 traverse the membrane as a helical segment. Over L660–K682 the chain is Cytoplasmic. The chain crosses the membrane as a helical span at residues V683 to G703. The Extracellular portion of the chain corresponds to S704 to T722. Residues M723–A743 form a helical membrane-spanning segment. The Cytoplasmic portion of the chain corresponds to Y744–H767. A helical membrane pass occupies residues I768–S788. Topologically, residues S789 to K802 are extracellular. Residue N792 is glycosylated (N-linked (GlcNAc...) asparagine). Residues F803 to F823 form a helical membrane-spanning segment. Residues N824 to L907 lie on the Cytoplasmic side of the membrane.

Belongs to the G-protein coupled receptor 1 family. Identified in a complex composed of RNF43, LGR5 and RSPO1. Also interacts with other R-spondin ligands, including RSPO2, RSPO3 and RSPO4. As to expression, expressed in skeletal muscle, placenta, spinal cord, and various region of brain. Expressed at the base of crypts in colonic and small mucosa stem cells. In premalignant cancer expression is not restricted to the cript base. Overexpressed in cancers of the ovary, colon and liver.

Its subcellular location is the cell membrane. It is found in the golgi apparatus. The protein localises to the trans-Golgi network membrane. Its function is as follows. Receptor for R-spondins that potentiates the canonical Wnt signaling pathway and acts as a stem cell marker of the intestinal epithelium and the hair follicle. Upon binding to R-spondins (RSPO1, RSPO2, RSPO3 or RSPO4), associates with phosphorylated LRP6 and frizzled receptors that are activated by extracellular Wnt receptors, triggering the canonical Wnt signaling pathway to increase expression of target genes. In contrast to classical G-protein coupled receptors, does not activate heterotrimeric G-proteins to transduce the signal. Involved in the development and/or maintenance of the adult intestinal stem cells during postembryonic development. The sequence is that of Leucine-rich repeat-containing G-protein coupled receptor 5 (LGR5) from Homo sapiens (Human).